A 255-amino-acid polypeptide reads, in one-letter code: Flagellar brake protein YcgR (255 aa).

Residues 130 to 245 form the PilZ domain; the sequence is QRREHFRVPL…MAAHLQRFVM (116 aa).

It belongs to the YcgR family. As to quaternary structure, monomer. Interacts with the flagellar basal bodies.

It localises to the bacterial flagellum basal body. Acts as a flagellar brake, regulating swimming and swarming in a bis-(3'-5') cyclic diguanylic acid (c-di-GMP)-dependent manner. Binds 1 c-di-GMP dimer per subunit. Increasing levels of c-di-GMP lead to decreased motility. The sequence is that of Flagellar brake protein YcgR from Thiobacillus denitrificans (strain ATCC 25259 / T1).